We begin with the raw amino-acid sequence, 520 residues long: 2-isopropylmalate synthase (520 aa).

The Pyruvate carboxyltransferase domain occupies 12 to 274 (IRIFDTTLRD…DSAINTPRIV (263 aa)). Mn(2+) is bound by residues D21, H209, H211, and N245. The regulatory domain stretch occupies residues 396–520 (RLASMTISDV…VVAGKTAAVA (125 aa)).

It belongs to the alpha-IPM synthase/homocitrate synthase family. LeuA type 1 subfamily. As to quaternary structure, homodimer. Requires Mn(2+) as cofactor.

Its subcellular location is the cytoplasm. It catalyses the reaction 3-methyl-2-oxobutanoate + acetyl-CoA + H2O = (2S)-2-isopropylmalate + CoA + H(+). It functions in the pathway amino-acid biosynthesis; L-leucine biosynthesis; L-leucine from 3-methyl-2-oxobutanoate: step 1/4. In terms of biological role, catalyzes the condensation of the acetyl group of acetyl-CoA with 3-methyl-2-oxobutanoate (2-ketoisovalerate) to form 3-carboxy-3-hydroxy-4-methylpentanoate (2-isopropylmalate). This is 2-isopropylmalate synthase from Xanthomonas axonopodis pv. citri (strain 306).